Consider the following 690-residue polypeptide: Elongation factor G (690 aa).

The region spanning 8–283 (EDYRNFGIMA…AVVDYLPSPV (276 aa)) is the tr-type G domain. Residues 17 to 24 (AHIDAGKT), 81 to 85 (DTPGH), and 135 to 138 (NKMD) each bind GTP.

Belongs to the TRAFAC class translation factor GTPase superfamily. Classic translation factor GTPase family. EF-G/EF-2 subfamily.

The protein resides in the cytoplasm. Catalyzes the GTP-dependent ribosomal translocation step during translation elongation. During this step, the ribosome changes from the pre-translocational (PRE) to the post-translocational (POST) state as the newly formed A-site-bound peptidyl-tRNA and P-site-bound deacylated tRNA move to the P and E sites, respectively. Catalyzes the coordinated movement of the two tRNA molecules, the mRNA and conformational changes in the ribosome. This chain is Elongation factor G, found in Rhodopseudomonas palustris (strain BisB18).